A 351-amino-acid chain; its full sequence is MLSGMALCRTRNCRFMMGEDGRRMRKCVLLLYQPCHLSTNSKPKSMLSLIASKAKYANEKYEHFLERKFPNFYLLYSTFMKGFRMLMTEAKEVGRIKQRMNHQGIPFHQLPYREMEKLRQFRRDIIKAAPVVIISIPPFANYLVFVLMYFFPRQLLIRHFWTPKQREEFLDIYHRMRVEAYPEILDGLLNAVPKLSERNLRNQMFQLCTQVQHGTHPQVENLHAVCTAFSGPPLGMKRLDVQQMKALSRVMFLTPHLPAFLLQHRLGSHICEIQNLDCALLKLGVNELSEEELKRACYIRGLNSTHLSREDCETWLHCWLQLSSMLKVSEASLLLHCMVLLSANYLQSIKQ.

The Cytoplasmic segment spans residues 1–130; the sequence is MLSGMALCRT…FRRDIIKAAP (130 aa). Residues 131–151 form a helical membrane-spanning segment; that stretch reads VVIISIPPFANYLVFVLMYFF. At 152-351 the chain is on the mitochondrial intermembrane side; sequence PRQLLIRHFW…SANYLQSIKQ (200 aa). Positions 172-351 constitute a Letm1 RBD domain; the sequence is IYHRMRVEAY…SANYLQSIKQ (180 aa).

Its subcellular location is the mitochondrion outer membrane. The protein resides in the nucleus. The protein localises to the mitochondrion inner membrane. Functionally, may play an essential role for mitochondrial structure and function. The sequence is that of LETM1 domain-containing protein 1 from Xenopus tropicalis (Western clawed frog).